Reading from the N-terminus, the 166-residue chain is Heavy metal-associated isoprenylated plant protein 45 (166 aa).

The HMA domain occupies 15 to 78 (LSIVELLVDM…MVKRTGRTAE (64 aa)). A metal cation is bound by residues C26 and C29. Position 163 is a cysteine methyl ester (C163). Residue C163 is the site of S-farnesyl cysteine attachment. A propeptide spans 164–166 (TIM) (removed in mature form).

Belongs to the HIPP family.

Its function is as follows. Heavy-metal-binding protein. The protein is Heavy metal-associated isoprenylated plant protein 45 of Arabidopsis thaliana (Mouse-ear cress).